The chain runs to 165 residues: Cystatin-like protein (165 aa).

The signal sequence occupies residues 1-19; it reads MDVALKLLLLAALTLLASA. 2 disulfide bridges follow: Cys80–Cys92 and Cys104–Cys118.

In terms of biological role, involved in hypoxia tolerance. The chain is Cystatin-like protein from Clarias batrachus (Walking catfish).